Here is a 221-residue protein sequence, read N- to C-terminus: uncharacterized protein (221 aa).

Transmembrane regions (helical) follow at residues 2–22 (FIAK…FFFV), 34–54 (LLTL…LAQA), 97–117 (AYGL…SNVI), 131–151 (ALDQ…FMGI), and 177–197 (ILWP…LQVI).

The protein belongs to the peroxisomal membrane protein PXMP2/4 family.

The protein localises to the membrane. This is an uncharacterized protein from Schizosaccharomyces pombe (strain 972 / ATCC 24843) (Fission yeast).